Consider the following 214-residue polypeptide: MRVRYKPWAEDYLKDHPELVDMEGQHAGKMTEWFDKTQPIHIEIGSGMGQFITTLAAQNPHINYISMEREKSIVYKVLDKVKEMGLTNLKIICNDAIELNEYFKDGEVSRIYLNFSDPWPKNRHAKRRLTYHTFLALYQQILNDEGDLHFKTDNRGLFAYSLESMSQFGMYFTKINLNLHQEDDGSNILTEYEKKFSDKGSRIYRMEAKFHSQK.

4 residues coordinate S-adenosyl-L-methionine: glutamate 43, glutamate 68, aspartate 95, and aspartate 117. The active site involves aspartate 117. Substrate contacts are provided by residues lysine 121, aspartate 153, and 190 to 193 (TEYE).

Belongs to the class I-like SAM-binding methyltransferase superfamily. TrmB family.

It carries out the reaction guanosine(46) in tRNA + S-adenosyl-L-methionine = N(7)-methylguanosine(46) in tRNA + S-adenosyl-L-homocysteine. It participates in tRNA modification; N(7)-methylguanine-tRNA biosynthesis. Catalyzes the formation of N(7)-methylguanine at position 46 (m7G46) in tRNA. This Staphylococcus aureus (strain JH1) protein is tRNA (guanine-N(7)-)-methyltransferase.